The chain runs to 496 residues: Cytochrome P450 monooxygenase cle4 (496 aa).

Residues 12 to 34 (FFTSPFPLTVGILSISLSGVLWY) traverse the membrane as a helical segment. Residue cysteine 435 coordinates heme.

Belongs to the cytochrome P450 family. It depends on heme as a cofactor.

It localises to the membrane. It participates in secondary metabolite biosynthesis; terpenoid biosynthesis. Functionally, cytochrome P450 monooxygenase; part of the cluster A that mediates the biosynthesis of chevalone E and its oxidized derivatives that possess a unique five-membered lactone ring and can synergistically enhance the cytotoxicity of doxorubicin (DOX) in breast cancer cells. Within the pathway, cle4 is involved in hydroxylation of the chavalone E scaffold at positions C-11 and C-12 and contributes with cle2 to the production of seven oxidation derivatives. The molecular scaffold is commonly biosynthesized by a series of enzymes including the non-reducing polyketide synthase (NR-PKS) cle1 that produces the alpha-pyrone triacetic acid lactone (TAL); The membrane-bound prenyltransferase cle5 that accepts TAL as its substrate to perform a C-3 geranylgeranylation reaction, in which the pathway-dedicated GGPS cle6 is required to provide GGPP, the other substrate of cle5; the FAD-dependent monooxygenase Cle3 that forms an (S)-epoxide ring at the terminal olefin of the geranylgeranyl group; and the terpene cyclase Cle7 that catalyzes the cyclization of the prenyl group that yields the pentacyclic pathway intermediate chevalone E. Chevalone E can derivatize into seven new oxidized analogs by the cytochrome P450 monooxygenases cle2 (acting at C-20) and cle4 (acting at C-11 and C-12). The sequence is that of Cytochrome P450 monooxygenase cle4 from Aspergillus versicolor.